Consider the following 157-residue polypeptide: Small ribosomal subunit protein uS7 (157 aa).

Belongs to the universal ribosomal protein uS7 family. Part of the 30S ribosomal subunit. Contacts proteins S9 and S11.

Functionally, one of the primary rRNA binding proteins, it binds directly to 16S rRNA where it nucleates assembly of the head domain of the 30S subunit. Is located at the subunit interface close to the decoding center, probably blocks exit of the E-site tRNA. The sequence is that of Small ribosomal subunit protein uS7 from Desulfotalea psychrophila (strain LSv54 / DSM 12343).